The primary structure comprises 515 residues: MDEFHRYGKEDNSRQQCFLYPLFFQEDLYAISHDHYLDGSSSSEPTEHLSSNDQFSFLTVKRLIGQIRQQNHSIVLFVNCAPNPLADCKKSSYSESVLEGLTLVLEVPFSIRSKYSVEGMNEWKSFRSIHSIFPFLEDKFPHSNYISDARIPYSIHPEILVRTFRRLIRDAPSLHPLRSVLYEYRNSPENLQRSIIVVPRVNTRFFLFLWNYYVYECESILFSLLKRSSHSRSLSHRPFPQRTHFHRKIKHIIIFSRRNSLKSIWLLKDPKINYVRYGERSIIAIKGTHLLLKKCRYYLLLFRQCYFHLWSEPYRVCSHQLSKNCSSSPGYFLRVRMNPLFVRTKMLDELFIADLITNEFDPIVPIVPILGLLAREKFCDVSGRPISKLSWTNLTDDDILNRFDQIWRNLFHYYSGSFGRDGLYRIKYILSLSCAKTLACKHKSTIRVVRKELGPELFQKSFSKEREFDSLPFSSKAAARSQRERIWHSDIPQINPLVNSWQKIQDLKIENLFDQ.

The protein belongs to the intron maturase 2 family. MatK subfamily.

Its subcellular location is the plastid. It is found in the chloroplast. Usually encoded in the trnK tRNA gene intron. Probably assists in splicing its own and other chloroplast group II introns. The polypeptide is Maturase K (Pinus armandii (Chinese white pine)).